We begin with the raw amino-acid sequence, 176 residues long: ATP-dependent protease subunit HslV (176 aa).

The active site involves Thr5. Gly161, Cys164, and Thr167 together coordinate Na(+).

This sequence belongs to the peptidase T1B family. HslV subfamily. As to quaternary structure, a double ring-shaped homohexamer of HslV is capped on each side by a ring-shaped HslU homohexamer. The assembly of the HslU/HslV complex is dependent on binding of ATP.

The protein localises to the cytoplasm. The catalysed reaction is ATP-dependent cleavage of peptide bonds with broad specificity.. Allosterically activated by HslU binding. Functionally, protease subunit of a proteasome-like degradation complex believed to be a general protein degrading machinery. In Sulfurovum sp. (strain NBC37-1), this protein is ATP-dependent protease subunit HslV.